A 401-amino-acid polypeptide reads, in one-letter code: Dual-specificity RNA methyltransferase RlmN (401 aa).

The Proton acceptor role is filled by Glu-114. Residues 120–365 (DKTRGTLCVS…TMVRRTRGDD (246 aa)) enclose the Radical SAM core domain. A disulfide bridge connects residues Cys-127 and Cys-370. [4Fe-4S] cluster contacts are provided by Cys-134, Cys-138, and Cys-141. Residues 187–188 (GE), Ser-219, 241–243 (SLH), and Asn-327 each bind S-adenosyl-L-methionine. Cys-370 (S-methylcysteine intermediate) is an active-site residue.

It belongs to the radical SAM superfamily. RlmN family. Requires [4Fe-4S] cluster as cofactor.

It localises to the cytoplasm. It carries out the reaction adenosine(2503) in 23S rRNA + 2 reduced [2Fe-2S]-[ferredoxin] + 2 S-adenosyl-L-methionine = 2-methyladenosine(2503) in 23S rRNA + 5'-deoxyadenosine + L-methionine + 2 oxidized [2Fe-2S]-[ferredoxin] + S-adenosyl-L-homocysteine. The catalysed reaction is adenosine(37) in tRNA + 2 reduced [2Fe-2S]-[ferredoxin] + 2 S-adenosyl-L-methionine = 2-methyladenosine(37) in tRNA + 5'-deoxyadenosine + L-methionine + 2 oxidized [2Fe-2S]-[ferredoxin] + S-adenosyl-L-homocysteine. Its function is as follows. Specifically methylates position 2 of adenine 2503 in 23S rRNA and position 2 of adenine 37 in tRNAs. m2A2503 modification seems to play a crucial role in the proofreading step occurring at the peptidyl transferase center and thus would serve to optimize ribosomal fidelity. The sequence is that of Dual-specificity RNA methyltransferase RlmN from Stenotrophomonas maltophilia (strain R551-3).